The following is a 481-amino-acid chain: Replication factor C large subunit (481 aa).

43-50 lines the ATP pocket; it reads GKPGIGKT. Composition is skewed to basic and acidic residues over residues 408-433 and 441-457; these read KVER…KDAD and VPKE…ERPA. Residues 408–481 form a disordered region; that stretch reads KVEREKEPEP…HNQSTLFDGF (74 aa). Over residues 471-481 the composition is skewed to polar residues; that stretch reads AHNQSTLFDGF.

It belongs to the activator 1 small subunits family. RfcL subfamily. Heteromultimer composed of small subunits (RfcS) and large subunits (RfcL).

Part of the RFC clamp loader complex which loads the PCNA sliding clamp onto DNA. This Methanoregula boonei (strain DSM 21154 / JCM 14090 / 6A8) protein is Replication factor C large subunit.